The chain runs to 968 residues: RNA polymerase-associated protein RapA (968 aa).

Residues 164–334 (EVGQRHAPRV…FARLRLLDPD (171 aa)) enclose the Helicase ATP-binding domain. Residue 177-184 (DEVGLGKT) coordinates ATP. Residues 280-283 (DEAH) carry the DEAH box motif. In terms of domain architecture, Helicase C-terminal spans 490-664 (RVEWLLNYLI…ATPSEQEGLD (175 aa)).

This sequence belongs to the SNF2/RAD54 helicase family. RapA subfamily. In terms of assembly, interacts with the RNAP. Has a higher affinity for the core RNAP than for the holoenzyme. Its ATPase activity is stimulated by binding to RNAP.

Functionally, transcription regulator that activates transcription by stimulating RNA polymerase (RNAP) recycling in case of stress conditions such as supercoiled DNA or high salt concentrations. Probably acts by releasing the RNAP, when it is trapped or immobilized on tightly supercoiled DNA. Does not activate transcription on linear DNA. Probably not involved in DNA repair. In Yersinia enterocolitica serotype O:8 / biotype 1B (strain NCTC 13174 / 8081), this protein is RNA polymerase-associated protein RapA.